A 730-amino-acid chain; its full sequence is Dynein axonemal intermediate chain 7 (730 aa).

Residues 1 to 14 (MAPKSKKAPSKKKM) are compositionally biased toward basic residues. The tract at residues 1-20 (MAPKSKKAPSKKKMTKAERL) is disordered.

The protein belongs to the DNAI7 family. As to quaternary structure, part of the multisubunit axonemal dynein complex formed at least of two heavy chains and a number of intermediate and light chains. Interacts with tubulin. Associates with microtubule. In terms of processing, ubiquitinated. Ubiquitination leads to its degradation through the 26S proteasome. Ubiquitin-proteasome-mediated DNAI7 degradation occurs in mitosis. High expressed in lung, kidney, and testis.

Its subcellular location is the cell projection. It is found in the cilium. It localises to the cytoplasm. In terms of biological role, via its association with the multisubunit axonemal dynein complex, is potentially involved in the regulation of cilia function. May also act as a cell cycle regulator. The polypeptide is Dynein axonemal intermediate chain 7 (Dnai7) (Mus musculus (Mouse)).